We begin with the raw amino-acid sequence, 244 residues long: Dehydration-responsive element-binding protein 2E (244 aa).

The tract at residues 1–25 is disordered; that stretch reads MEKEDNGSKQSSSASVVSSRRRRRV. Residues 20 to 46 carry the Nuclear localization signal motif; the sequence is RRRRRVVEPVEATLQRWEEEGLARARR. A DNA-binding region (AP2/ERF) is located at residues 69-134; it reads RFRGVRQRVW…YGPYARLNFP (66 aa).

It belongs to the AP2/ERF transcription factor family. ERF subfamily. As to expression, expressed in xylem tissues, stigma, anthers and region where sepals and petals attach the peduncle.

Its subcellular location is the nucleus. Transcriptional activator that binds specifically to the DNA sequence 5'-[AG]CCGAC-3'. Binding to the C-repeat/DRE element mediates abscisic acid-inducible transcription. Involved in the regulation of plant development and tolerance to abiotic stresses. This chain is Dehydration-responsive element-binding protein 2E (DREB2E), found in Arabidopsis thaliana (Mouse-ear cress).